A 722-amino-acid chain; its full sequence is MSDVRIPGVGAGKYDNLIQSLMKKERIPRDNAAAKVKVYEVQNNALKDVERYARDLRDAVKGLYSFNNPFAEKEAHSSNERAFTVDATRDAAEQNHTLRVKDIAQGDAFLSDPLPEDFRVPSGTYTFCIGEKKICVSWKGGHYRDFIRAVNKQGKDSLTLSEIKTSGASRALLFRSELTGKSSRLSFEDAALDLALRLRVVQEARSDVFTQDVLSVGPGKHARLDFPHPLRAQAGLTLEFVASLEGASIANEESRAHTPAQGGAPTSSHGNTASAAHNQDGAAAVRPTEPANGAPVQEETSSVFFEGVTVKNEASQGDLPTTDGLEKYPAVDDKGDNPRAPGESQGTATHEGSGSSTDNADDTRSTGALAGSGKLALESLQGHALPLPPLVLTQNAPQMVSIPLREYGDVRALILDNAQARGALTLRAIRVRAEDAPGGYVPVNPASQAQDAAFDFDGVHVTRGTNSITDLIPGVTLSLHERTEKTETLSVTPDVNAMKNAIIEFVAKYNRLMAEINIVTSNKSAIIDELAYLTPEEKKKETEQLGSLHGDSTLLMLKDRLRRNTSNAYRAGDDGASRTLAHIGISTKAHASSGINTAQLRGYLEIDEEKLHSSLNAQKDQVRALFGHDSDGDLLVDNGVAFTLTELLNPYLGRSGIFAIRSNGVDERIKSTEKRVETYDKQLEKKERELRHKYHTMDGALRSLQKQSDAIQNFNQSVRNRN.

2 disordered regions span residues 251–299 and 311–368; these read NEES…VQEE and KNEA…STGA. Over residues 264–277 the composition is skewed to polar residues; that stretch reads APTSSHGNTASAAH. Basic and acidic residues predominate over residues 324 to 337; it reads GLEKYPAVDDKGDN. Over residues 344-358 the composition is skewed to polar residues; it reads SQGTATHEGSGSSTD. The stretch at 660 to 710 forms a coiled coil; the sequence is IRSNGVDERIKSTEKRVETYDKQLEKKERELRHKYHTMDGALRSLQKQSDA.

Belongs to the FliD family. Homopentamer.

The protein resides in the periplasmic flagellum. It is found in the periplasm. In terms of biological role, required for the morphogenesis and for the elongation of the flagellar filament by facilitating polymerization of the flagellin monomers at the tip of growing filament. Forms a capping structure, which prevents flagellin subunits (transported through the central channel of the flagellum) from leaking out without polymerization at the distal end. The protein is Flagellar hook-associated protein 2 (fliD) of Treponema pallidum (strain Nichols).